A 455-amino-acid chain; its full sequence is tRNA modification GTPase MnmE (455 aa).

(6S)-5-formyl-5,6,7,8-tetrahydrofolate is bound by residues Arg24, Glu81, and Lys121. The 162-residue stretch at 217–378 (GMKVVIAGRP…LREHLKDCMG (162 aa)) folds into the TrmE-type G domain. Residue Asn227 coordinates K(+). Residues 227 to 232 (NAGKSS), 246 to 252 (TDIAGTT), 271 to 274 (DTAG), and 359 to 361 (SAR) contribute to the GTP site. Ser231 is a binding site for Mg(2+). Thr246, Ile248, and Thr251 together coordinate K(+). Thr252 contributes to the Mg(2+) binding site. A (6S)-5-formyl-5,6,7,8-tetrahydrofolate-binding site is contributed by Lys455.

Belongs to the TRAFAC class TrmE-Era-EngA-EngB-Septin-like GTPase superfamily. TrmE GTPase family. In terms of assembly, homodimer. Heterotetramer of two MnmE and two MnmG subunits. K(+) is required as a cofactor.

The protein localises to the cytoplasm. Its function is as follows. Exhibits a very high intrinsic GTPase hydrolysis rate. Involved in the addition of a carboxymethylaminomethyl (cmnm) group at the wobble position (U34) of certain tRNAs, forming tRNA-cmnm(5)s(2)U34. The sequence is that of tRNA modification GTPase MnmE from Photobacterium profundum (strain SS9).